The primary structure comprises 268 residues: 3-deoxy-manno-octulosonate cytidylyltransferase (268 aa).

This sequence belongs to the KdsB family.

Its subcellular location is the cytoplasm. It carries out the reaction 3-deoxy-alpha-D-manno-oct-2-ulosonate + CTP = CMP-3-deoxy-beta-D-manno-octulosonate + diphosphate. It functions in the pathway nucleotide-sugar biosynthesis; CMP-3-deoxy-D-manno-octulosonate biosynthesis; CMP-3-deoxy-D-manno-octulosonate from 3-deoxy-D-manno-octulosonate and CTP: step 1/1. It participates in bacterial outer membrane biogenesis; lipopolysaccharide biosynthesis. Activates KDO (a required 8-carbon sugar) for incorporation into bacterial lipopolysaccharide in Gram-negative bacteria. The polypeptide is 3-deoxy-manno-octulosonate cytidylyltransferase (Ralstonia pickettii (strain 12J)).